Reading from the N-terminus, the 430-residue chain is Serine--tRNA ligase (430 aa).

An L-serine-binding site is contributed by 236–238 (TAE). 267 to 269 (RRE) is an ATP binding site. Residue Glu-290 coordinates L-serine. 354–357 (EISS) lines the ATP pocket. Residue Ser-390 participates in L-serine binding.

It belongs to the class-II aminoacyl-tRNA synthetase family. Type-1 seryl-tRNA synthetase subfamily. As to quaternary structure, homodimer. The tRNA molecule binds across the dimer.

It is found in the cytoplasm. It carries out the reaction tRNA(Ser) + L-serine + ATP = L-seryl-tRNA(Ser) + AMP + diphosphate + H(+). It catalyses the reaction tRNA(Sec) + L-serine + ATP = L-seryl-tRNA(Sec) + AMP + diphosphate + H(+). It participates in aminoacyl-tRNA biosynthesis; selenocysteinyl-tRNA(Sec) biosynthesis; L-seryl-tRNA(Sec) from L-serine and tRNA(Sec): step 1/1. Catalyzes the attachment of serine to tRNA(Ser). Is also able to aminoacylate tRNA(Sec) with serine, to form the misacylated tRNA L-seryl-tRNA(Sec), which will be further converted into selenocysteinyl-tRNA(Sec). The polypeptide is Serine--tRNA ligase (Gloeothece citriformis (strain PCC 7424) (Cyanothece sp. (strain PCC 7424))).